Consider the following 1205-residue polypeptide: Plasma membrane calcium-transporting ATPase 4 (1205 aa).

Topologically, residues Met-1 to Ala-100 are cytoplasmic. A helical transmembrane segment spans residues Leu-101–Phe-121. Residues Tyr-122–Thr-147 are Extracellular-facing. The helical transmembrane segment at Gly-148–Phe-168 threads the bilayer. Residues Asn-169–Leu-369 are Cytoplasmic-facing. Residues Asp-294–Asp-318 are disordered. A phosphoserine mark is found at Ser-329 and Ser-335. A helical membrane pass occupies residues Ile-370–Ile-390. The Extracellular segment spans residues Gln-391–Lys-409. The helical transmembrane segment at Phe-410–Val-430 threads the bilayer. Topologically, residues Thr-431 to Phe-844 are cytoplasmic. Catalysis depends on Asp-466, which acts as the 4-aspartylphosphate intermediate. Asp-786 and Asp-790 together coordinate Mg(2+). A helical membrane pass occupies residues Leu-845–Ile-865. Residues Thr-866–Lys-872 lie on the Extracellular side of the membrane. Residues Ala-873–Thr-893 form a helical membrane-spanning segment. Residues Glu-894–Lys-919 lie on the Cytoplasmic side of the membrane. Residues Asn-920–Leu-942 traverse the membrane as a helical segment. Residues Phe-943 to Pro-956 are Extracellular-facing. The helical transmembrane segment at Pro-957–Ala-979 threads the bilayer. Topologically, residues Arg-980–Asn-995 are cytoplasmic. A helical transmembrane segment spans residues Ile-996–Gly-1016. Residues Gly-1017–Gln-1029 are Extracellular-facing. A helical transmembrane segment spans residues Trp-1030 to Ile-1050. The Cytoplasmic portion of the chain corresponds to Pro-1051–Val-1205. Residues Ser-1065 and Ser-1071 each carry the phosphoserine modification. Arg-1072 is subject to Omega-N-methylarginine. The calmodulin-binding subdomain A stretch occupies residues Leu-1087 to Gln-1104. A Phosphothreonine; by PKC modification is found at Thr-1103. The segment at Ile-1105–Asn-1114 is calmodulin-binding subdomain B. Phosphoserine is present on Ser-1145.

Belongs to the cation transport ATPase (P-type) (TC 3.A.3) family. Type IIB subfamily. In terms of assembly, interacts with PDZD11. Interacts with SLC35G1 and STIM1. Interacts with calmodulin. In terms of tissue distribution, specifically expressed by sperm in testis (at protein level).

The protein resides in the membrane. It localises to the cell projection. The protein localises to the cilium. It is found in the flagellum membrane. The enzyme catalyses Ca(2+)(in) + ATP + H2O = Ca(2+)(out) + ADP + phosphate + H(+). Its activity is regulated as follows. Activated by calcium/calmodulin. In terms of biological role, calcium/calmodulin-regulated and magnesium-dependent enzyme that catalyzes the hydrolysis of ATP coupled with the transport of calcium out of the cell. By regulating sperm cell calcium homeostasis, may play a role in sperm motility. The sequence is that of Plasma membrane calcium-transporting ATPase 4 from Mus musculus (Mouse).